The following is a 310-amino-acid chain: D-alanine--D-alanine ligase (310 aa).

The region spanning 104–305 (KRLFHSEGLP…MPQLAERILQ (202 aa)) is the ATP-grasp domain. Residue 135–190 (LGDFHGAAFVKPLDSGSSVGISRAVGKDELIRGVAKALSVSHRCMVERAIEGRELT) participates in ATP binding. Residues Asp259, Glu272, and Asn274 each contribute to the Mg(2+) site.

It belongs to the D-alanine--D-alanine ligase family. It depends on Mg(2+) as a cofactor. Mn(2+) serves as cofactor.

It is found in the cytoplasm. The catalysed reaction is 2 D-alanine + ATP = D-alanyl-D-alanine + ADP + phosphate + H(+). It participates in cell wall biogenesis; peptidoglycan biosynthesis. Its function is as follows. Cell wall formation. The protein is D-alanine--D-alanine ligase of Magnetococcus marinus (strain ATCC BAA-1437 / JCM 17883 / MC-1).